Consider the following 325-residue polypeptide: MTITANKRHYLEKVSHQGIISALAFDQRGALKQMMAAHQEGEATVTQIETLKVLVSEELTPYASSILLDPEYGLLATKVRANQTGLLLAYEKTGYDATTTSRLPDCLVEWSVKRLKAAGADAIKFLLYYDVDGDEQINLQKQAYIERIGSECTAEDIPFFLELLSYDERISDNNSAAYAKLKPHKVNGAMSVFSDKRFGVDVLKVEVPVNMAYVEGFTEGEVHYSQAEAIKAFQDQEAASHLPYIYLSAGVSAKLFQETLYFAAAAGAQFSGVLCGRATWAGSVPVYITKGEDEARKWLCTEGFQNIDELNRVLEETASPWTEKI.

It belongs to the aldolase LacD family.

The catalysed reaction is D-tagatofuranose 1,6-bisphosphate = D-glyceraldehyde 3-phosphate + dihydroxyacetone phosphate. Its pathway is carbohydrate metabolism; D-tagatose 6-phosphate degradation; D-glyceraldehyde 3-phosphate and glycerone phosphate from D-tagatose 6-phosphate: step 2/2. The polypeptide is Tagatose 1,6-diphosphate aldolase 1 (lacD1) (Streptococcus pyogenes serotype M1).